A 476-amino-acid polypeptide reads, in one-letter code: Probable cytosolic Fe-S cluster assembly factor GI11683 (476 aa).

8 residues coordinate [4Fe-4S] cluster: Cys-23, Cys-68, Cys-71, Cys-74, Cys-187, Cys-243, Cys-395, and Cys-399.

It belongs to the NARF family.

Component of the cytosolic iron-sulfur (Fe/S) protein assembly machinery. Required for maturation of extramitochondrial Fe/S proteins. This is Probable cytosolic Fe-S cluster assembly factor GI11683 from Drosophila mojavensis (Fruit fly).